The chain runs to 271 residues: 4-hydroxy-tetrahydrodipicolinate reductase (271 aa).

Residues 10 to 15 (GAGGRM), E36, 100 to 102 (GTT), and 124 to 127 (SGNM) each bind NAD(+). The Proton donor/acceptor role is filled by H157. Residue H158 participates in (S)-2,3,4,5-tetrahydrodipicolinate binding. K161 functions as the Proton donor in the catalytic mechanism. Position 167 to 168 (167 to 168 (GT)) interacts with (S)-2,3,4,5-tetrahydrodipicolinate.

This sequence belongs to the DapB family.

The protein resides in the cytoplasm. It catalyses the reaction (S)-2,3,4,5-tetrahydrodipicolinate + NAD(+) + H2O = (2S,4S)-4-hydroxy-2,3,4,5-tetrahydrodipicolinate + NADH + H(+). The catalysed reaction is (S)-2,3,4,5-tetrahydrodipicolinate + NADP(+) + H2O = (2S,4S)-4-hydroxy-2,3,4,5-tetrahydrodipicolinate + NADPH + H(+). Its pathway is amino-acid biosynthesis; L-lysine biosynthesis via DAP pathway; (S)-tetrahydrodipicolinate from L-aspartate: step 4/4. In terms of biological role, catalyzes the conversion of 4-hydroxy-tetrahydrodipicolinate (HTPA) to tetrahydrodipicolinate. The protein is 4-hydroxy-tetrahydrodipicolinate reductase of Bradyrhizobium diazoefficiens (strain JCM 10833 / BCRC 13528 / IAM 13628 / NBRC 14792 / USDA 110).